Here is a 46-residue protein sequence, read N- to C-terminus: GTP cyclohydrolase 1 (46 aa).

Cys7 lines the Zn(2+) pocket.

The protein belongs to the GTP cyclohydrolase I family. Homomer.

The enzyme catalyses GTP + H2O = 7,8-dihydroneopterin 3'-triphosphate + formate + H(+). The protein operates within cofactor biosynthesis; 7,8-dihydroneopterin triphosphate biosynthesis; 7,8-dihydroneopterin triphosphate from GTP: step 1/1. This chain is GTP cyclohydrolase 1 (folE), found in Bacillus pumilus (Bacillus mesentericus).